The sequence spans 297 residues: PIH1 domain-containing protein 1 (297 aa).

Belongs to the PIH1 family.

It localises to the nucleus. Functionally, involved in the assembly of C/D box small nucleolar ribonucleoprotein (snoRNP) particles. Recruits the SWI/SNF complex to the core promoter of rRNA genes and enhances pre-rRNA transcription. Mediates interaction of TELO2 with the R2TP complex which is necessary for the stability of MTOR and SMG1. Positively regulates the assembly and activity of the mTORC1 complex. This Xenopus laevis (African clawed frog) protein is PIH1 domain-containing protein 1 (pih1d1).